Consider the following 207-residue polypeptide: MANVTLFKQDGSQNGNVELNDSIWAIEPNENVVFDAIIMQRASLRQGTHAVKNRSAVRGGGRKPWRQKGTGRARQGSIRSPQWRGGGVVFGPTPRSYSYKLPRKVRRLAIKSVLSQKVIDNDLIVVDSFSFDAPKTKEFAEVLNKLDVNTKVLVVLEDGNDFTALSARNLPNVTVVPADGINVLDVVGNQKLILTQAALSKIEEVLA.

A disordered region spans residues 49-78 (HAVKNRSAVRGGGRKPWRQKGTGRARQGSI). Residues 60–71 (GGRKPWRQKGTG) are compositionally biased toward basic residues.

Belongs to the universal ribosomal protein uL4 family. As to quaternary structure, part of the 50S ribosomal subunit.

One of the primary rRNA binding proteins, this protein initially binds near the 5'-end of the 23S rRNA. It is important during the early stages of 50S assembly. It makes multiple contacts with different domains of the 23S rRNA in the assembled 50S subunit and ribosome. In terms of biological role, forms part of the polypeptide exit tunnel. The protein is Large ribosomal subunit protein uL4 of Latilactobacillus sakei subsp. sakei (strain 23K) (Lactobacillus sakei subsp. sakei).